The following is a 502-amino-acid chain: Probable mitochondrial-processing peptidase subunit alpha (502 aa).

The protein belongs to the peptidase M16 family. In terms of assembly, heterodimer of mas2 (alpha) and mas1 (beta) subunits, forming the mitochondrial processing protease (MPP) in which mas2 is involved in substrate recognition and binding and mas1 is the catalytic subunit.

Its subcellular location is the mitochondrion matrix. Its function is as follows. Substrate recognition and binding subunit of the essential mitochondrial processing protease (MPP), which cleaves the mitochondrial sequence off newly imported precursors proteins. The polypeptide is Probable mitochondrial-processing peptidase subunit alpha (mas2) (Schizosaccharomyces pombe (strain 972 / ATCC 24843) (Fission yeast)).